A 200-amino-acid chain; its full sequence is Histone chaperone asf1a-B (200 aa).

Belongs to the ASF1 family. As to quaternary structure, interacts with histone H3 (including both histone H3.1 and H3.3) and histone H4.

It is found in the nucleus. Functionally, histone chaperone that facilitates histone deposition and histone exchange and removal during nucleosome assembly and disassembly. The sequence is that of Histone chaperone asf1a-B (asf1ab) from Xenopus laevis (African clawed frog).